A 179-amino-acid chain; its full sequence is Large ribosomal subunit protein uL5 (179 aa).

The protein belongs to the universal ribosomal protein uL5 family. As to quaternary structure, part of the 50S ribosomal subunit; part of the 5S rRNA/L5/L18/L25 subcomplex. Contacts the 5S rRNA and the P site tRNA. Forms a bridge to the 30S subunit in the 70S ribosome.

In terms of biological role, this is one of the proteins that bind and probably mediate the attachment of the 5S RNA into the large ribosomal subunit, where it forms part of the central protuberance. In the 70S ribosome it contacts protein S13 of the 30S subunit (bridge B1b), connecting the 2 subunits; this bridge is implicated in subunit movement. Contacts the P site tRNA; the 5S rRNA and some of its associated proteins might help stabilize positioning of ribosome-bound tRNAs. This is Large ribosomal subunit protein uL5 from Dictyoglomus turgidum (strain DSM 6724 / Z-1310).